Reading from the N-terminus, the 388-residue chain is Transcription factor TB1 (388 aa).

The TCP domain occupies arginine 115–isoleucine 173. 2 disordered regions span residues serine 180–arginine 269 and alanine 289–serine 331. Positions serine 187 to asparagine 201 are enriched in polar residues. Basic and acidic residues-rich tracts occupy residues glycine 210–lysine 224 and valine 247–arginine 269. One can recognise a R domain in the interval lysine 250 to lysine 267. The segment covering alanine 289–threonine 314 has biased composition (low complexity).

Interacts with MADS57. As to expression, expressed in the axillary bud of the first formed leaf node. Expressed in axillary buds, shoot apical meristem, young leaves, vascular tissues and the tips of crown roots.

It localises to the nucleus. Its function is as follows. Probable transcription factor that functions as a negative regulator of lateral branching, presumably through its expression in axillary buds. Involved in the fine tuning of shoot branching. May function as an integrator of multiple signaling pathways to regulate the development of axillary buds. Works partially downstream of strigolactones to inhibit bud outgrowth. Binds to MADS57 to suppress the negative regulation of D14 by MADS57 and balance the expression of D14 for tillering. The polypeptide is Transcription factor TB1 (Oryza sativa subsp. japonica (Rice)).